The primary structure comprises 313 residues: Acetaldehyde dehydrogenase (313 aa).

NAD(+) is bound at residue 15–18 (SGNI). The Acyl-thioester intermediate role is filled by Cys133. Residues 164–172 (SAGPGTRAN) and Asn289 contribute to the NAD(+) site.

It belongs to the acetaldehyde dehydrogenase family.

The catalysed reaction is acetaldehyde + NAD(+) + CoA = acetyl-CoA + NADH + H(+). This chain is Acetaldehyde dehydrogenase, found in Rhizobium rhizogenes (strain K84 / ATCC BAA-868) (Agrobacterium radiobacter).